Consider the following 1346-residue polypeptide: Proline-rich protein 36 (1346 aa).

Disordered regions lie at residues 1-403 (MDNK…TQLI), 426-512 (SVSS…QATP), 537-606 (PLTT…PSPL), 633-679 (PRQT…VSPL), 711-1155 (LETQ…AELA), and 1168-1240 (PPLA…RSPK). Residues 10 to 26 (AGAAARTPAARAPGLLT) show a composition bias toward low complexity. Residues 27-40 (PRPPGSPRPPPPVT) are compositionally biased toward pro residues. Composition is skewed to low complexity over residues 41–55 (PAAL…AVGR) and 86–97 (SSRNPASRPPAS). Over residues 137 to 152 (SAEETVARGKATEAPK) the composition is skewed to basic and acidic residues. The span at 165 to 177 (SGPTPGTPSPAMA) shows a compositional bias: low complexity. Over residues 191–203 (RPAPSARPRPPTE) the composition is skewed to pro residues. The segment covering 208–220 (SVSSASEHSTTEP) has biased composition (polar residues). 2 stretches are compositionally biased toward low complexity: residues 235 to 255 (QRPA…PARS) and 293 to 312 (APAL…PSGT). Pro residues-rich tracts occupy residues 329–343 (ATLP…PPPA), 371–380 (PLAPPSPSAP), and 387–397 (PSPPATPPSQV). Positions 426-464 (SVSSPLQSMPPTQANPALPSLPTLLSPLATPPLSAMSPL) are enriched in low complexity. Over residues 494 to 506 (TPPPQASPSPSPP) the composition is skewed to pro residues. The span at 546-558 (PPLVSPSLLASPP) shows a compositional bias: low complexity. A compositionally biased stretch (pro residues) spans 559–578 (LQAPPHPQAPPSMTTPPMQA). Polar residues predominate over residues 633 to 647 (PRQTQASLISPSRPA). Positions 648–657 (STPPDSPPLQ) are enriched in pro residues. Over residues 658–679 (APLSLPASPPLQTSLSPAVSPL) the composition is skewed to low complexity. Polar residues predominate over residues 724 to 733 (TPPASLTTPP). Pro residues-rich tracts occupy residues 781–821 (ETPP…PALA) and 829–865 (PSPP…PPLS). Low complexity predominate over residues 866-875 (PLATPSPQAP). 3 stretches are compositionally biased toward pro residues: residues 887–917 (FSPP…PSQA), 926–997 (LQVP…PPAS), and 1004–1015 (AKPPPQAPPALA). Composition is skewed to low complexity over residues 1029–1046 (FPGQ…MSPL), 1137–1146 (DSGPEGGAAA), and 1224–1239 (GKAA…SRSP). At Ser1310 the chain carries Phosphoserine.

The chain is Proline-rich protein 36 from Homo sapiens (Human).